A 375-amino-acid chain; its full sequence is Glutamate 5-kinase (375 aa).

An ATP-binding site is contributed by Lys13. 3 residues coordinate substrate: Ser54, Asp141, and Asn153. ATP-binding positions include 173-174 (TD) and 216-222 (TGGMATK). Residues 281–359 (TGKIFIDAGA…EAIAAVLGYV (79 aa)) enclose the PUA domain.

It belongs to the glutamate 5-kinase family.

It is found in the cytoplasm. The catalysed reaction is L-glutamate + ATP = L-glutamyl 5-phosphate + ADP. It participates in amino-acid biosynthesis; L-proline biosynthesis; L-glutamate 5-semialdehyde from L-glutamate: step 1/2. In terms of biological role, catalyzes the transfer of a phosphate group to glutamate to form L-glutamate 5-phosphate. This Synechocystis sp. (strain ATCC 27184 / PCC 6803 / Kazusa) protein is Glutamate 5-kinase.